The chain runs to 388 residues: Transcription factor TB1 (388 aa).

The TCP domain maps to 115–173 (RKDRHSKISTAGGMRDRRMRLSLDVARKFFALQDMLGFDKASKTVQWLLNMSKAAIREI). Disordered regions lie at residues 180-269 (SVCE…EKNR) and 289-331 (AAGE…VGVS). The segment covering 187-201 (SSSLSVDGKQQQHSN) has biased composition (polar residues). 2 stretches are compositionally biased toward basic and acidic residues: residues 210 to 224 (GDHKGAAHGHSDGKK) and 247 to 269 (VPDKESRAKARERARERTKEKNR). Positions 250 to 267 (KESRAKARERARERTKEK) constitute a R domain. A compositionally biased stretch (low complexity) spans 289–314 (AAGEDKSPTSPSNNLNHSSSTNLVST).

In terms of assembly, interacts with MADS57. In terms of tissue distribution, expressed in the axillary bud of the first formed leaf node. Expressed in axillary buds, shoot apical meristem, young leaves, vascular tissues and the tips of crown roots.

It is found in the nucleus. Its function is as follows. Probable transcription factor that functions as a negative regulator of lateral branching, presumably through its expression in axillary buds. Involved in the fine tuning of shoot branching. May function as an integrator of multiple signaling pathways to regulate the development of axillary buds. Works partially downstream of strigolactones to inhibit bud outgrowth. Binds to MADS57 to suppress the negative regulation of D14 by MADS57 and balance the expression of D14 for tillering. The sequence is that of Transcription factor TB1 from Oryza sativa subsp. japonica (Rice).